The chain runs to 215 residues: Histone-like protein 18C (215 aa).

A disordered region spans residues Cys-140–Met-215. 2 stretches are compositionally biased toward basic residues: residues Ser-149–Lys-190 and Ala-197–Met-215.

Its function is as follows. Not known. Encoded in the intron of cAMP-dependent protein kinase regulatory chain type I. This chain is Histone-like protein 18C (Mst77F), found in Drosophila melanogaster (Fruit fly).